The chain runs to 144 residues: MIQPKPCSVLSLDIGDKRIGIAGCDPLGISITHLPAIFRDSFEKDLKEFEKICFDRRVEGLICGNPLDMNGMETKQSIRCKKYGIKLAKCLKLPLAFINEHCSTLEAKEKFSLKNDKTGRLDSAAAAILLQQWLIEGPDLDDSN.

This sequence belongs to the YqgF nuclease family.

The protein localises to the cytoplasm. In terms of biological role, could be a nuclease involved in processing of the 5'-end of pre-16S rRNA. The sequence is that of Putative pre-16S rRNA nuclease from Prochlorococcus marinus (strain NATL1A).